Here is a 613-residue protein sequence, read N- to C-terminus: Arginine--tRNA ligase (613 aa).

Positions 123 to 133 (PNVAKPMHVGH) match the 'HIGH' region motif.

Belongs to the class-I aminoacyl-tRNA synthetase family. In terms of assembly, monomer.

It is found in the cytoplasm. It catalyses the reaction tRNA(Arg) + L-arginine + ATP = L-arginyl-tRNA(Arg) + AMP + diphosphate. The sequence is that of Arginine--tRNA ligase from Caulobacter sp. (strain K31).